Here is a 476-residue protein sequence, read N- to C-terminus: UDP-N-acetylmuramate--L-alanine ligase (476 aa).

107–113 (GTHGKTT) lines the ATP pocket.

This sequence belongs to the MurCDEF family.

It localises to the cytoplasm. It catalyses the reaction UDP-N-acetyl-alpha-D-muramate + L-alanine + ATP = UDP-N-acetyl-alpha-D-muramoyl-L-alanine + ADP + phosphate + H(+). The protein operates within cell wall biogenesis; peptidoglycan biosynthesis. Its function is as follows. Cell wall formation. This Roseiflexus castenholzii (strain DSM 13941 / HLO8) protein is UDP-N-acetylmuramate--L-alanine ligase.